Consider the following 551-residue polypeptide: Methyl-accepting chemotaxis protein I (551 aa).

Residues Met1–Lys6 lie on the Cytoplasmic side of the membrane. Residues Ile7–Phe30 form a helical membrane-spanning segment. Residues Asn31 to Ser190 lie on the Periplasmic side of the membrane. Residues Arg64 to Arg73 form a the 3 Arg may form a positively charged pocket, which binds the alpha-carboxyl group of the attractant AA region. The chain crosses the membrane as a helical span at residues Gln191–Val210. The Cytoplasmic segment spans residues Trp211 to Phe551. One can recognise an HAMP domain in the interval Ala216–Gly268. In terms of domain architecture, Methyl-accepting transducer spans Gly273–Glu502. Position 297 is a glutamate methyl ester (Gln) (Gln297). Glu304 carries the post-translational modification Glutamate methyl ester (Glu). The residue at position 311 (Gln311) is a Glutamate methyl ester (Gln). Glu493 and Glu502 each carry glutamate methyl ester (Glu).

The protein belongs to the methyl-accepting chemotaxis (MCP) protein family.

It is found in the cell inner membrane. Functionally, receptor for the attractant L-serine and related amino acids. Is also responsible for chemotaxis away from a wide range of repellents, including leucine, indole, and weak acids. In terms of biological role, chemotactic-signal transducers respond to changes in the concentration of attractants and repellents in the environment, transduce a signal from the outside to the inside of the cell, and facilitate sensory adaptation through the variation of the level of methylation. Attractants increase the level of methylation while repellents decrease the level of methylation, the methyl groups are added by the methyltransferase CheR and removed by the methylesterase CheB. The polypeptide is Methyl-accepting chemotaxis protein I (tsr) (Escherichia coli (strain K12)).